The following is a 29-amino-acid chain: Brevinin-2Td (29 aa).

C23 and C29 are oxidised to a cystine.

This sequence belongs to the frog skin active peptide (FSAP) family. Brevinin subfamily. As to expression, expressed by the skin glands.

The protein resides in the secreted. Functionally, antibacterial activity against representative Gram-negative and Gram-positive bacteria. The protein is Brevinin-2Td of Rana temporaria (European common frog).